The following is a 126-amino-acid chain: Large ribosomal subunit protein uL22 (126 aa).

It belongs to the universal ribosomal protein uL22 family. As to quaternary structure, part of the 50S ribosomal subunit.

Functionally, this protein binds specifically to 23S rRNA; its binding is stimulated by other ribosomal proteins, e.g. L4, L17, and L20. It is important during the early stages of 50S assembly. It makes multiple contacts with different domains of the 23S rRNA in the assembled 50S subunit and ribosome. Its function is as follows. The globular domain of the protein is located near the polypeptide exit tunnel on the outside of the subunit, while an extended beta-hairpin is found that lines the wall of the exit tunnel in the center of the 70S ribosome. This chain is Large ribosomal subunit protein uL22, found in Bradyrhizobium sp. (strain BTAi1 / ATCC BAA-1182).